Here is a 215-residue protein sequence, read N- to C-terminus: Negative modulator of initiation of replication (215 aa).

The segment at 71–93 (AETPKPSSEQEIRTPARKQSTQS) is disordered. The tract at residues 181-187 (NTNSGRK) is interaction with DNA.

Belongs to the SeqA family. Homodimer. Polymerizes to form helical filaments.

The protein localises to the cytoplasm. Its function is as follows. Negative regulator of replication initiation, which contributes to regulation of DNA replication and ensures that replication initiation occurs exactly once per chromosome per cell cycle. Binds to pairs of hemimethylated GATC sequences in the oriC region, thus preventing assembly of replication proteins and re-initiation at newly replicated origins. Repression is relieved when the region becomes fully methylated. The protein is Negative modulator of initiation of replication of Mannheimia succiniciproducens (strain KCTC 0769BP / MBEL55E).